A 554-amino-acid chain; its full sequence is Glucose-6-phosphate isomerase (554 aa).

An N-acetylserine modification is found at Ser2. Thr53 bears the Phosphothreonine mark. Residues 168-169 (GS), 218-223 (SKTFTT), Gln363, Glu367, His398, and Lys520 each bind D-glucose 6-phosphate. A Phosphothreonine modification is found at Thr220. The Proton donor role is filled by Glu367. Residues His398 and Lys520 contribute to the active site.

Belongs to the GPI family. As to quaternary structure, homodimer.

The protein localises to the cytoplasm. It is found in the cytosol. The enzyme catalyses alpha-D-glucose 6-phosphate = beta-D-fructose 6-phosphate. The protein operates within carbohydrate degradation; glycolysis; D-glyceraldehyde 3-phosphate and glycerone phosphate from D-glucose: step 2/4. Strongly inhibited by the polyol (sugar alcohol) phosphate D-glucitol 6-phosphate (D-sorbitol 6-phosphate). Also inhibited by the polyol (sugar alcohol) phosphate D-ribitol 5-phosphate. Functionally, in the cytoplasm, catalyzes the conversion of glucose-6-phosphate to fructose-6-phosphate, the second step in glycolysis, and the reverse reaction during gluconeogenesis. This Saccharomyces cerevisiae (strain ATCC 204508 / S288c) (Baker's yeast) protein is Glucose-6-phosphate isomerase (PGI1).